The following is a 144-amino-acid chain: 6-pyruvoyl tetrahydrobiopterin synthase (144 aa).

Serine 18 is subject to Phosphoserine. Histidine 23 is a binding site for Zn(2+). At serine 27 the chain carries Phosphoserine. The active-site Proton acceptor is the cysteine 42. Positions 48 and 50 each coordinate Zn(2+). The Charge relay system role is filled by histidine 89. Tyrosine 127 carries the phosphotyrosine modification. Residue glutamate 133 is the Charge relay system of the active site.

Belongs to the PTPS family. Homodimer. Homohexamer formed of two homotrimers in a head to head fashion. The cofactor is Zn(2+). Post-translationally, phosphorylation of Ser-18 is required for maximal enzyme activity.

The catalysed reaction is 7,8-dihydroneopterin 3'-triphosphate = 6-pyruvoyl-5,6,7,8-tetrahydropterin + triphosphate + H(+). It functions in the pathway cofactor biosynthesis; tetrahydrobiopterin biosynthesis; tetrahydrobiopterin from 7,8-dihydroneopterin triphosphate: step 1/3. Functionally, involved in the biosynthesis of tetrahydrobiopterin, an essential cofactor of aromatic amino acid hydroxylases. Catalyzes the transformation of 7,8-dihydroneopterin triphosphate into 6-pyruvoyl tetrahydropterin. This is 6-pyruvoyl tetrahydrobiopterin synthase from Mus musculus (Mouse).